The sequence spans 228 residues: N-acylneuraminate cytidylyltransferase (228 aa).

It belongs to the CMP-NeuNAc synthase family.

Its subcellular location is the cytoplasm. It catalyses the reaction an N-acylneuraminate + CTP = a CMP-N-acyl-beta-neuraminate + diphosphate. This Neisseria meningitidis serogroup B (strain ATCC BAA-335 / MC58) protein is N-acylneuraminate cytidylyltransferase (neuA).